We begin with the raw amino-acid sequence, 1014 residues long: Protein argonaute 2 (1014 aa).

Residues 1–15 (MERGGYRGGRGDGRG) are compositionally biased toward basic and acidic residues. The tract at residues 1–137 (MERGGYRGGR…PSTSTTVVSE (137 aa)) is disordered. Composition is skewed to gly residues over residues 18 to 29 (GRGYGGGGGGGE) and 49 to 58 (RGGGNRGQGR). The span at 83 to 104 (QFQQPRPQVAPQPSQAPASYAG) shows a compositional bias: low complexity. Over residues 105 to 114 (SVGGVAGRGA) the composition is skewed to gly residues. A compositionally biased stretch (low complexity) spans 121–137 (VPSDSASPSTSTTVVSE). Residues 369–482 (SVIEYLKLYF…VPMEFCDLVE (114 aa)) form the PAZ domain. In terms of domain architecture, Piwi spans 666–965 (LVLCAMSRKD…VAFRGRMYHE (300 aa)). Interaction with guide RNA stretches follow at residues 857–858 (KR), 900–908 (HHGGIGTSK), and 937–959 (FTRC…VAFR).

Belongs to the argonaute family. Ago subfamily. Interacts with NERD.

Functionally, involved in RNA-mediated post-transcriptional gene silencing (PTGS). Main component of the RNA-induced silencing complex (RISC) that binds to a short guide RNA such as microRNA (miRNA) or small interfering RNA (siRNA). RISC uses the mature miRNA or siRNA as a guide for slicer-directed cleavage of homologous mRNAs to repress gene expression. Associates mainly with siRNAs of 21 nucleotide in length and preferentially recruits small RNAs with a 5' terminal adenosine. Probably involved in antiviral RNA silencing. Associates with siRNA derived from cucumber mosaic virus (CMV). Targeted by turnip yellows virus (TuYV) protein P0 (via F-box-like domain) for probable proteasome degradation and thereby inactivating AGO2 function in RNA silencing. Required to direct NERD-dependent DNA methylation and silencing. This Arabidopsis thaliana (Mouse-ear cress) protein is Protein argonaute 2 (AGO2).